A 130-amino-acid chain; its full sequence is Flagellar assembly factor FliW (130 aa).

Belongs to the FliW family. Interacts with translational regulator CsrA and flagellin(s).

It is found in the cytoplasm. In terms of biological role, acts as an anti-CsrA protein, binds CsrA and prevents it from repressing translation of its target genes, one of which is flagellin. Binds to flagellin and participates in the assembly of the flagellum. This chain is Flagellar assembly factor FliW, found in Borrelia hermsii (strain HS1 / DAH).